Here is a 230-residue protein sequence, read N- to C-terminus: Protein LURP-one-related 11 (230 aa).

Belongs to the LOR family.

Its function is as follows. Might be related to the phospholipid scramblase and tubby-like superfamily of membrane tethered transcription factors. The sequence is that of Protein LURP-one-related 11 from Arabidopsis thaliana (Mouse-ear cress).